Consider the following 636-residue polypeptide: Threonine--tRNA ligase (636 aa).

Positions 1–63 (MNEINVTLPD…ADGARVEIVT (63 aa)) constitute a TGS domain. Residues 243–534 (DHRKLGRELD…LIEHFAGNFP (292 aa)) are catalytic. 3 residues coordinate Zn(2+): C335, H386, and H511.

It belongs to the class-II aminoacyl-tRNA synthetase family. As to quaternary structure, homodimer. Requires Zn(2+) as cofactor.

The protein resides in the cytoplasm. It catalyses the reaction tRNA(Thr) + L-threonine + ATP = L-threonyl-tRNA(Thr) + AMP + diphosphate + H(+). Functionally, catalyzes the attachment of threonine to tRNA(Thr) in a two-step reaction: L-threonine is first activated by ATP to form Thr-AMP and then transferred to the acceptor end of tRNA(Thr). Also edits incorrectly charged L-seryl-tRNA(Thr). This Geobacter sp. (strain M21) protein is Threonine--tRNA ligase.